Consider the following 266-residue polypeptide: Isopentenyl phosphate kinase (266 aa).

ATP is bound at residue 5 to 9 (KLGGS). Ala47 provides a ligand contact to substrate. ATP is bound at residue Gly48. His52 and Gly157 together coordinate substrate. ATP contacts are provided by residues Asp178, 183–188 (YTRNPK), Gly219, and Lys223.

Belongs to the isopentenyl phosphate kinase family. As to quaternary structure, homodimer.

It carries out the reaction isopentenyl phosphate + ATP = isopentenyl diphosphate + ADP. Its function is as follows. Catalyzes the formation of isopentenyl diphosphate (IPP), the building block of all isoprenoids. Has lower activity with dimethylallyl phosphate (DMAP) and isopentenyl thiolophosphate (ISP). Has low activity with 1-butyl phosphate (BP) and 3-buten-1-yl phosphate (BEP). Has no significant activity with geranyl phosphate (in vitro). The polypeptide is Isopentenyl phosphate kinase (Methanothermobacter thermautotrophicus (strain ATCC 29096 / DSM 1053 / JCM 10044 / NBRC 100330 / Delta H) (Methanobacterium thermoautotrophicum)).